The primary structure comprises 33 residues: Cytochrome b6-f complex subunit 8 (33 aa).

The helical transmembrane segment at 2–22 threads the bilayer; the sequence is IFTLGWASLAAIFTFSIAMVV.

This sequence belongs to the PetN family. In terms of assembly, the 4 large subunits of the cytochrome b6-f complex are cytochrome b6, subunit IV (17 kDa polypeptide, PetD), cytochrome f and the Rieske protein, while the 4 small subunits are PetG, PetL, PetM and PetN. The complex functions as a dimer.

Its subcellular location is the cellular thylakoid membrane. Component of the cytochrome b6-f complex, which mediates electron transfer between photosystem II (PSII) and photosystem I (PSI), cyclic electron flow around PSI, and state transitions. The sequence is that of Cytochrome b6-f complex subunit 8 from Prochlorococcus marinus (strain NATL2A).